A 435-amino-acid polypeptide reads, in one-letter code: Adenylosuccinate synthetase (435 aa).

Residues 20-26 (GDEGKGK) and 48-50 (GHT) each bind GTP. D21 serves as the catalytic Proton acceptor. D21 and G48 together coordinate Mg(2+). IMP contacts are provided by residues 21–24 (DEGK), 46–49 (NAGH), T134, R148, Q229, T244, and R308. Catalysis depends on H49, which acts as the Proton donor. 304 to 310 (TTTGRPR) contributes to the substrate binding site. Residues R310, 336 to 338 (KVD), and 422 to 424 (SMG) contribute to the GTP site.

The protein belongs to the adenylosuccinate synthetase family. As to quaternary structure, homodimer. It depends on Mg(2+) as a cofactor.

The protein localises to the cytoplasm. The enzyme catalyses IMP + L-aspartate + GTP = N(6)-(1,2-dicarboxyethyl)-AMP + GDP + phosphate + 2 H(+). Its pathway is purine metabolism; AMP biosynthesis via de novo pathway; AMP from IMP: step 1/2. Functionally, plays an important role in the de novo pathway of purine nucleotide biosynthesis. Catalyzes the first committed step in the biosynthesis of AMP from IMP. The polypeptide is Adenylosuccinate synthetase (Thermoplasma acidophilum (strain ATCC 25905 / DSM 1728 / JCM 9062 / NBRC 15155 / AMRC-C165)).